We begin with the raw amino-acid sequence, 102 residues long: Vacuolar ATPase assembly integral membrane protein VMA21 (102 aa).

Residues 1 to 30 (MERYDKATLNAAFAPEFRQNEGSLTSTLRT) lie on the Cytoplasmic side of the membrane. The chain crosses the membrane as a helical span at residues 31 to 51 (LLFFTALMITLPVGLYFSSKA). The Lumenal portion of the chain corresponds to 52–66 (YIFEGTLGMSNRDSY). Residues 67-87 (FYAAIVAVVTVHVVLAMFVYV) traverse the membrane as a helical segment. Over 88-102 (AWSEGTRQWREGKQD) the chain is Cytoplasmic.

This sequence belongs to the VMA21 family. As to quaternary structure, associates with the V0 complex of the vacuolar ATPase (V-ATPase). Interacts with ATP6AP2.

The protein resides in the endoplasmic reticulum membrane. It is found in the endoplasmic reticulum-Golgi intermediate compartment membrane. The protein localises to the cytoplasmic vesicle. Its subcellular location is the COPII-coated vesicle membrane. Required for the assembly of the V0 complex of the vacuolar ATPase (V-ATPase) in the endoplasmic reticulum. The chain is Vacuolar ATPase assembly integral membrane protein VMA21 from Gallus gallus (Chicken).